Consider the following 251-residue polypeptide: Ubiquinone/menaquinone biosynthesis C-methyltransferase UbiE (251 aa).

Residues Thr74, Asp95, and 123 to 124 contribute to the S-adenosyl-L-methionine site; that span reads NA.

This sequence belongs to the class I-like SAM-binding methyltransferase superfamily. MenG/UbiE family.

It carries out the reaction a 2-demethylmenaquinol + S-adenosyl-L-methionine = a menaquinol + S-adenosyl-L-homocysteine + H(+). The catalysed reaction is a 2-methoxy-6-(all-trans-polyprenyl)benzene-1,4-diol + S-adenosyl-L-methionine = a 5-methoxy-2-methyl-3-(all-trans-polyprenyl)benzene-1,4-diol + S-adenosyl-L-homocysteine + H(+). Its pathway is quinol/quinone metabolism; menaquinone biosynthesis; menaquinol from 1,4-dihydroxy-2-naphthoate: step 2/2. The protein operates within cofactor biosynthesis; ubiquinone biosynthesis. Functionally, methyltransferase required for the conversion of demethylmenaquinol (DMKH2) to menaquinol (MKH2) and the conversion of 2-polyprenyl-6-methoxy-1,4-benzoquinol (DDMQH2) to 2-polyprenyl-3-methyl-6-methoxy-1,4-benzoquinol (DMQH2). The chain is Ubiquinone/menaquinone biosynthesis C-methyltransferase UbiE from Shewanella pealeana (strain ATCC 700345 / ANG-SQ1).